The sequence spans 150 residues: UPF0756 membrane protein HDEF_0364 (150 aa).

5 helical membrane-spanning segments follow: residues 1 to 21 (MMFF…GLIS), 28 to 48 (ISVV…FPWV), 51 to 71 (YALK…IASG), 88 to 108 (ILGI…VSLM), and 123 to 143 (ILGV…AGLL).

The protein belongs to the UPF0756 family.

The protein localises to the cell membrane. This Hamiltonella defensa subsp. Acyrthosiphon pisum (strain 5AT) protein is UPF0756 membrane protein HDEF_0364.